Reading from the N-terminus, the 206-residue chain is Large ribosomal subunit protein uL4 (206 aa).

The interval 48 to 97 (THAVKNRSLVSGGGKKPWKQKHTGRARQGSTRASQWVGGGKAMGPKPRDY) is disordered. A compositionally biased stretch (basic residues) spans 63 to 72 (KPWKQKHTGR).

Belongs to the universal ribosomal protein uL4 family. As to quaternary structure, part of the 50S ribosomal subunit.

One of the primary rRNA binding proteins, this protein initially binds near the 5'-end of the 23S rRNA. It is important during the early stages of 50S assembly. It makes multiple contacts with different domains of the 23S rRNA in the assembled 50S subunit and ribosome. Functionally, forms part of the polypeptide exit tunnel. The chain is Large ribosomal subunit protein uL4 from Anaeromyxobacter dehalogenans (strain 2CP-1 / ATCC BAA-258).